Consider the following 2055-residue polypeptide: Multiple PDZ domain protein (2055 aa).

In terms of domain architecture, L27 spans 1 to 63 (MLETIDKNRA…SLQQLKDQVN (63 aa)). The PDZ 1 domain occupies 138–225 (IFELLKPPCG…TVQLVIARGS (88 aa)). A Phosphoserine modification is found at Ser231. Residues 258–338 (TIELVNDGSG…RVKLMIARGA (81 aa)) enclose the PDZ 2 domain. A compositionally biased stretch (low complexity) spans 348 to 360 (LGITLSSSTSSTS). The segment at 348-372 (LGITLSSSTSSTSEMRVDASTQKND) is disordered. PDZ domains follow at residues 378–464 (DVEL…MRKG), 546–627 (VAHV…CRRT), and 693–779 (SIEL…VAKP). Ser783 and Ser1066 each carry phosphoserine. The PDZ 6 domain maps to 996–1077 (TVTIAKGSSS…IGPDIKITYV (82 aa)). Positions 1111-1130 (PELPEREEGEGEESELQNAA) are disordered. Positions 1139-1231 (RVELWREPSK…PVVFMVQSII (93 aa)) constitute a PDZ 7 domain. The residue at position 1158 (Arg1158) is an Omega-N-methylarginine. Over residues 1264 to 1274 (LTTDQAPSQSE) the composition is skewed to polar residues. The tract at residues 1264-1299 (LTTDQAPSQSESETEKPALCNVPPSSPSVFSEMGSD) is disordered. Positions 1338–1421 (VIELEKGQSG…KVKIIFIRNA (84 aa)) constitute a PDZ 8 domain. The segment covering 1435-1445 (ADSPSSTSDSP) has biased composition (low complexity). The interval 1435–1459 (ADSPSSTSDSPQNKEVEPCSTTSAS) is disordered. Positions 1471–1552 (QLELPKDQGG…TVKLTVRAEN (82 aa)) constitute a PDZ 9 domain. Residues 1557–1597 (AVPSSAVTVSGERKDNSQTPAVPAPDLEPIPSTSRSSTPAV) are disordered. PDZ domains lie at 1614 to 1697 (TIEI…YRDE) and 1710 to 1792 (TIEL…GRVK). Positions 1795–1834 (PFHSERRPSQSSQVSESSLSSFTPPLSGINTSESLESNSK) are disordered. Phosphoserine is present on residues Ser1803 and Ser1809. Low complexity predominate over residues 1803–1815 (SQSSQVSESSLSS). A compositionally biased stretch (polar residues) spans 1816–1834 (FTPPLSGINTSESLESNSK). 2 consecutive PDZ domains span residues 1847–1933 (TVEI…VAGG) and 1972–2055 (TITL…MVLS).

Interacts with CLDN5, DLG4, GRIN1, SYNGAP1, CAMK2A and CAMK2B, HTR2A, HTR2B, HTR2C, PLEKHA1/TAPP1 and PLEKHA2/TAPP2. Interacts with F11R/JAM, CLDN1, NG2, CXADR, CRB1, MPP4 and PALS1. Interacts with FAT4 (via cytoplasmic domain). Interacts with DLL1. As to expression, in the brain, it is strongly expressed in the choroid plexus. Within the hippocampal formation, strongest expression was seen in the soma of CA1-4 pyramidal cells. Expressed in most neocortical regions with the strongest expression in piriform cortex and amygdaloid nuclei but also detected in the subiculum and olfactory bulb. In the cerebellum, the highest level of expression was found in Purkinje cells. Moderately expressed in the granular layer and molecular layer. Expressed in the pontine nuclei, parts of spinal trigeminal nuclei, and the principal sensory trigeminal nuclei of the metencephalon. Expressed in all thalamic and hypothalamic nuclei, and the substantia nigra (at protein level). Ubiquitously expressed.

It is found in the cell membrane. The protein localises to the apical cell membrane. Its subcellular location is the postsynaptic density. The protein resides in the cell projection. It localises to the dendrite. It is found in the cell junction. The protein localises to the tight junction. Its subcellular location is the synapse. The protein resides in the synaptosome. Member of the NMDAR signaling complex that may play a role in control of AMPAR potentiation and synaptic plasticity in excitatory synapses. Promotes clustering of HT2RC at the cell surface. The polypeptide is Multiple PDZ domain protein (Mpdz) (Mus musculus (Mouse)).